The sequence spans 599 residues: DNA-directed RNA polymerase III subunit RPC3 (599 aa).

Residues 350 to 375 (PKKRSASNGDDERPTKKIKTEDSDDI) are disordered. A compositionally biased stretch (basic and acidic residues) spans 359–370 (DDERPTKKIKTE). The leucine-zipper stretch occupies residues 528–549 (LIFSMAEILSNIQAFREDHKIL).

It belongs to the RNA polymerase beta chain family. As to quaternary structure, component of the RNA polymerase III (Pol III) complex consisting of 17 subunits.

Its subcellular location is the nucleus. DNA-dependent RNA polymerase catalyzes the transcription of DNA into RNA using the four ribonucleoside triphosphates as substrates. Specific core component of RNA polymerase III which synthesizes small RNAs, such as 5S rRNA and tRNAs. The protein is DNA-directed RNA polymerase III subunit RPC3 (RPC82) of Scheffersomyces stipitis (strain ATCC 58785 / CBS 6054 / NBRC 10063 / NRRL Y-11545) (Yeast).